The following is a 287-amino-acid chain: Isopentenyl-diphosphate Delta-isomerase 1, chloroplastic (287 aa).

The N-terminal 51 residues, 1 to 51 (MTLLLNTTAKLYIAPRTLPFTSSSTFARSPFLRIPSLLKPLSPLTARVSLS), are a transit peptide targeting the chloroplast. K90 is a substrate binding site. Residues H94 and H106 each contribute to the Mg(2+) site. The region spanning 104-256 (LLHRAFSVFL…GLKLSPWFRL (153 aa)) is the Nudix hydrolase domain. Positions 125 and 129 each coordinate substrate. C141 is a catalytic residue. S142 contributes to the substrate binding site. The short motif at 142 to 172 (SHPLYRESELIDEESLGARNAAQRKLLDELG) is the Nudix box element. Mg(2+) contacts are provided by E201 and E203. E203 is an active-site residue.

This sequence belongs to the IPP isomerase type 1 family. Monomer. Requires Mg(2+) as cofactor. As to expression, mainly expressed in roots and trichomes and, to a lower extent, in leaves, flowers and stems.

It is found in the plastid. The protein localises to the chloroplast. It carries out the reaction isopentenyl diphosphate = dimethylallyl diphosphate. It participates in isoprenoid biosynthesis; dimethylallyl diphosphate biosynthesis; dimethylallyl diphosphate from isopentenyl diphosphate: step 1/1. Its pathway is porphyrin-containing compound metabolism; chlorophyll biosynthesis. Its function is as follows. Catalyzes the 1,3-allylic rearrangement of the homoallylic substrate isopentenyl (IPP) to its highly electrophilic allylic isomer, dimethylallyl diphosphate (DMAPP). This chain is Isopentenyl-diphosphate Delta-isomerase 1, chloroplastic, found in Cannabis sativa (Hemp).